A 556-amino-acid polypeptide reads, in one-letter code: TNF receptor-associated factor 6-B (556 aa).

The RING-type; degenerate zinc finger occupies 72 to 111 (CPICLMALREAVQTPCGHRFCKACIVKSLRDAGHKCPVDN). 2 TRAF-type zinc fingers span residues 152–204 (RHLG…EDMS) and 205–261 (GHEL…NDLA). The stretch at 318-356 (SHQDCSQETRNLRETIEQLEGRLVRQDHQIRELIAKMET) forms a coiled coil. An MATH domain is found at 384-533 (NGVFIWKIKG…NDTLFVRCAV (150 aa)).

Belongs to the TNF receptor-associated factor family. A subfamily. In terms of assembly, homotrimer. Homooligomer.

It localises to the cytoplasm. The protein localises to the cell cortex. The protein resides in the nucleus. It is found in the lipid droplet. The enzyme catalyses S-ubiquitinyl-[E2 ubiquitin-conjugating enzyme]-L-cysteine + [acceptor protein]-L-lysine = [E2 ubiquitin-conjugating enzyme]-L-cysteine + N(6)-ubiquitinyl-[acceptor protein]-L-lysine.. It functions in the pathway protein modification; protein ubiquitination. In terms of biological role, E3 ubiquitin ligase that, together with UBE2N and UBE2V1, mediates the synthesis of 'Lys-63'-linked-polyubiquitin chains conjugated to proteins, such as IKBKG, IRAK1, AKT1 and AKT2. Also mediates ubiquitination of free/unanchored polyubiquitin chain that leads to MAP3K7 activation. In Xenopus laevis (African clawed frog), this protein is TNF receptor-associated factor 6-B (traf6-b).